Consider the following 1019-residue polypeptide: StAR-related lipid transfer protein 8 (1019 aa).

Disordered regions lie at residues 92 to 122 (QPLL…KVKK) and 134 to 154 (SLRR…CLAT). The segment covering 100–115 (SPSNQPFLSPPQGQEG) has biased composition (polar residues). Ser-108 is modified (phosphoserine). Residues 134 to 147 (SLRRKEKGDSRQTE) are compositionally biased toward basic and acidic residues. Asymmetric dimethylarginine is present on Arg-168. 2 positions are modified to phosphoserine: Ser-234 and Ser-237. Disordered regions lie at residues 325–355 (MYPD…EVAT) and 406–482 (APAQ…VGAS). Residues 334–347 (KEEEEEEEEEEEEA) show a composition bias toward acidic residues. Polar residues-rich tracts occupy residues 418–430 (NSTA…SSLS) and 437–455 (ISDT…NSMN). Phosphoserine is present on residues Ser-494 and Ser-502. Residues 569–773 (PPLIHVQRTG…HMISDCKKLF (205 aa)) form the Rho-GAP domain. Residues 731–754 (DSSSPRIKSKRSLVGRPGPRDLSE) form a disordered region. One can recognise an START domain in the interval 805–1013 (AQAAGVSLSL…RDSFPTLQAA (209 aa)).

In terms of assembly, binds both the SH2 and PTB domains of TNS1.

It is found in the cell junction. The protein localises to the focal adhesion. Functionally, accelerates GTPase activity of RHOA and CDC42, but not RAC1. Stimulates the hydrolysis of phosphatidylinositol 4,5-bisphosphate by PLCD1. The protein is StAR-related lipid transfer protein 8 (Stard8) of Mus musculus (Mouse).